Consider the following 500-residue polypeptide: Apolipoprotein N-acyltransferase (500 aa).

Helical transmembrane passes span 5-25, 38-58, 74-94, 111-131, 145-165, and 185-205; these read VAPF…WIFV, LLLL…FWIT, LAIT…FGAI, ILIG…GPLW, AILH…IVSV, and LAIA…LYTA. Residues 215-462 form the CN hydrolase domain; the sequence is LKVGIVQGNI…ETIYRRQTQN (248 aa). The Proton acceptor role is filled by E261. K318 is an active-site residue. Residue C369 is the Nucleophile of the active site. The chain crosses the membrane as a helical span at residues 469–489; that stretch reads DWFTPLLVGLSFLGWSLNIFW.

It belongs to the CN hydrolase family. Apolipoprotein N-acyltransferase subfamily.

It localises to the cell inner membrane. It carries out the reaction N-terminal S-1,2-diacyl-sn-glyceryl-L-cysteinyl-[lipoprotein] + a glycerophospholipid = N-acyl-S-1,2-diacyl-sn-glyceryl-L-cysteinyl-[lipoprotein] + a 2-acyl-sn-glycero-3-phospholipid + H(+). It functions in the pathway protein modification; lipoprotein biosynthesis (N-acyl transfer). Catalyzes the phospholipid dependent N-acylation of the N-terminal cysteine of apolipoprotein, the last step in lipoprotein maturation. The sequence is that of Apolipoprotein N-acyltransferase from Nostoc sp. (strain PCC 7120 / SAG 25.82 / UTEX 2576).